The following is a 518-amino-acid chain: MAVWQAASGKVYLPPSTPVARVQSTDEYVQRTNIYYHAYSDRLLTVGHPYFNVYDVNSAKIKVPKVSGNQHRVFRLKLPDPNRFALADMSVYNPDKERLVWACRGIEIGRGQPLGVGSVGHPLFNKVGDTENPSSYKTQPNSTDDRQNVSFDPKQLQMFIIGCAPCLGEHWDKAIPCATDNPPPGSCPPIELINSAIQDGDMADIGYGNLNFKALQQNRSDVSLDIVNETCKYPDFLKMQNDVYGDSCFFYARREQCYARHFFVRGGKTGDDIPAGQIDEGSMKNAYYIPPMNDQAQYKIGNSMYFPTVSGSLVSSDAQLFNRPFWLQRAQGHNNGICWFNQLFVTVVDNTRNTNFSISVNPENADVSKIENYKAESFQEYLRHVEEYELSLILQLCKVPLTAEVLAQINAMNANILEEWQLGFVPAPDNPIHDTYRYIDSAATRCPDKNPPKEREDPYKNMKFWDVDLTERLSLDLDQYSLGRKFLFQAGLQQTTVNGTKTLSSRVSTRGIKRKRKN.

The interval 127-149 is disordered; that stretch reads VGDTENPSSYKTQPNSTDDRQNV. Polar residues predominate over residues 131–142; it reads ENPSSYKTQPNS.

It belongs to the papillomaviridae L1 protein family. As to quaternary structure, self-assembles into homopentamers. The capsid has an icosahedral symmetry and consists of 72 capsomers, with each capsomer being a pentamer of L1. Interacts with the minor capsid protein L2; this interaction is necessary for viral genome encapsidation. Interacts with protein E2; this interaction enhances E2-dependent replication and transcription activation.

The protein resides in the virion. Its subcellular location is the host nucleus. Forms an icosahedral capsid with a T=7 symmetry and a 50 nm diameter. The capsid is composed of 72 pentamers linked to each other by disulfide bonds and associated with L2 proteins. Binds to heparan sulfate proteoglycans on cell surface of basal layer keratinocytes to provide initial virion attachment. This binding mediates a conformational change in the virus capsid that facilitates efficient infection. The virion enters the host cell via endocytosis. During virus trafficking, L1 protein dissociates from the viral DNA and the genomic DNA is released to the host nucleus. The virion assembly takes place within the cell nucleus. Encapsulates the genomic DNA together with protein L2. This is Major capsid protein L1 from Human papillomavirus 21.